The chain runs to 477 residues: Ketoisovalerate oxidoreductase subunit VorA (477 aa).

Heterotrimer of the VorA, VorB and VorC subunits.

The enzyme catalyses 3-methyl-2-oxobutanoate + 2 oxidized [2Fe-2S]-[ferredoxin] + CoA = 2-methylpropanoyl-CoA + 2 reduced [2Fe-2S]-[ferredoxin] + CO2 + H(+). This Methanothermobacter thermautotrophicus (strain ATCC 29096 / DSM 1053 / JCM 10044 / NBRC 100330 / Delta H) (Methanobacterium thermoautotrophicum) protein is Ketoisovalerate oxidoreductase subunit VorA (vorA).